The primary structure comprises 334 residues: PDZ domain-containing protein MAGIX (334 aa).

2 stretches are compositionally biased toward basic and acidic residues: residues 1–13 (MEPR…DPRG) and 209–224 (LETH…EPRK). Disordered stretches follow at residues 1 to 26 (MEPR…LAGP) and 209 to 306 (LETH…WLVP). Residues 125–209 (SVELVRGYAG…QLHLVIRRPL (85 aa)) enclose the PDZ domain. Positions 244–260 (GSRSSSTSLVQHPPSRT) are enriched in polar residues. S272 is modified (phosphoserine).

The protein is PDZ domain-containing protein MAGIX (MAGIX) of Homo sapiens (Human).